The following is a 332-amino-acid chain: MALLCYNRACGQRFDPETNSDDACTYHPGVPVFHDALKGWSCCKRRTTDFSDFLSIVGCTKGRHNSEKPPEPVKPEVKTTEKKELSELKPKFQEHIIQAPKPVEAIKRPSPDEPMTNLELKISASLKQALDKLKLSSGNEEDKKEEDNDEIKIGTSCKNGGCSKTYRGLESLEEVCVYHSGVPIFHEGMKYWSCCRRKTSDFNTFLAQEGCTKGRHMWTKKDAGKKVVPCRHDWHQTGGEVTISVYAKNSLPELSRVEANSTLLNVHIVFEGEKEFDQNVKLWGVIDVKRSYVTMTATKIEINMRKAEPMQWASLELPAAKKQEKQKDDTTD.

Ala-2 is modified (N-acetylalanine). Residues 2-77 are interaction with PPP5C; sequence ALLCYNRACG…KPPEPVKPEV (76 aa). Residues Cys-5, Cys-10, Cys-24, His-27, Cys-42, and Cys-43 each contribute to the Zn(2+) site. CHORD domains lie at 5–64 and 157–216; these read CYNR…KGRH and CKNG…KGRH. Phosphothreonine is present on Thr-47. Position 51 is a phosphoserine (Ser-51). Residues Cys-59, His-64, Cys-157, Cys-162, Cys-176, His-179, Cys-194, Cys-195, Cys-211, and His-216 each coordinate Zn(2+). The segment at 62–82 is disordered; that stretch reads GRHNSEKPPEPVKPEVKTTEK. The segment covering 64-82 has biased composition (basic and acidic residues); it reads HNSEKPPEPVKPEVKTTEK. The interaction with HSP90AA1 and HSP90AB1 stretch occupies residues 65-316; it reads NSEKPPEPVK…AEPMQWASLE (252 aa). Residues 227-316 form the CS domain; the sequence is VVPCRHDWHQ…AEPMQWASLE (90 aa).

In terms of assembly, interacts with HSP90AA1, HSP90AB1, PPP5C, ROCK1 and ROCK2.

In terms of biological role, regulates centrosome duplication, probably by inhibiting the kinase activity of ROCK2. Proposed to act as co-chaperone for HSP90. May play a role in the regulation of NOD1 via a HSP90 chaperone complex. In vitro, has intrinsic chaperone activity. This function may be achieved by inhibiting association of ROCK2 with NPM1. Plays a role in ensuring the localization of the tyrosine kinase receptor EGFR to the plasma membrane, and thus ensures the subsequent regulation of EGFR activity and EGF-induced actin cytoskeleton remodeling. Involved in stress response. Prevents tumorigenesis. This is Cysteine and histidine-rich domain-containing protein 1 (CHORDC1) from Macaca fascicularis (Crab-eating macaque).